The sequence spans 455 residues: Enolase (455 aa).

A (2R)-2-phosphoglycerate-binding site is contributed by Gln166. Glu208 (proton donor) is an active-site residue. Residues Asp249, Glu311, and Asp338 each contribute to the Mg(2+) site. (2R)-2-phosphoglycerate is bound by residues Lys363, Arg392, Ser393, and Lys414. The active-site Proton acceptor is Lys363.

It belongs to the enolase family. It depends on Mg(2+) as a cofactor.

The protein resides in the cytoplasm. The protein localises to the secreted. It localises to the cell surface. The catalysed reaction is (2R)-2-phosphoglycerate = phosphoenolpyruvate + H2O. The protein operates within carbohydrate degradation; glycolysis; pyruvate from D-glyceraldehyde 3-phosphate: step 4/5. Its function is as follows. Catalyzes the reversible conversion of 2-phosphoglycerate (2-PG) into phosphoenolpyruvate (PEP). It is essential for the degradation of carbohydrates via glycolysis. The chain is Enolase from Mycoplasma mobile (strain ATCC 43663 / 163K / NCTC 11711) (Mesomycoplasma mobile).